Here is a 159-residue protein sequence, read N- to C-terminus: Secreted RxLR effector protein 50 (159 aa).

The signal sequence occupies residues 1 to 19 (MRSSTVLYVLGAAILAVNG). The RxLR-dEER motif lies at 38-54 (RWLRSNAMEHETDDEER).

The protein belongs to the RxLR effector family.

The protein localises to the secreted. It localises to the host nucleus. It is found in the host cytoplasm. Secreted effector that completely suppresses the host cell death induced by cell death-inducing proteins. The chain is Secreted RxLR effector protein 50 from Plasmopara viticola (Downy mildew of grapevine).